Consider the following 263-residue polypeptide: Undecaprenyl-diphosphatase 2 (263 aa).

8 consecutive transmembrane segments (helical) span residues 15–37 (GLTEFLPVSSTGHMILTGHLIGF), 42–62 (AKVFEVVIQLGSILAVVVIFW), 79–99 (SLNLLHIIIGMIPAGVLGVLF), 107–127 (LFGPGPVVISLVAGGILMIVA), 142–162 (ITYKQAFTIGMFQCLALWPGF), 183–203 (AEYTFILAVPMMVAASGLDLI), 216–236 (LFVTGFVTAFVVAMLAIVSFL), and 242–262 (VKLTPFAYYRFILAAVFYFFI).

It belongs to the UppP family.

It is found in the cell membrane. It catalyses the reaction di-trans,octa-cis-undecaprenyl diphosphate + H2O = di-trans,octa-cis-undecaprenyl phosphate + phosphate + H(+). Functionally, catalyzes the dephosphorylation of undecaprenyl diphosphate (UPP). Confers resistance to bacitracin. This chain is Undecaprenyl-diphosphatase 2, found in Bacillus cereus (strain ATCC 14579 / DSM 31 / CCUG 7414 / JCM 2152 / NBRC 15305 / NCIMB 9373 / NCTC 2599 / NRRL B-3711).